Reading from the N-terminus, the 131-residue chain is Small ribosomal subunit protein uS9 (131 aa).

Belongs to the universal ribosomal protein uS9 family.

In Mesoplasma florum (strain ATCC 33453 / NBRC 100688 / NCTC 11704 / L1) (Acholeplasma florum), this protein is Small ribosomal subunit protein uS9.